The primary structure comprises 361 residues: Phospho-N-acetylmuramoyl-pentapeptide-transferase (361 aa).

A run of 10 helical transmembrane segments spans residues 27-47, 72-92, 94-114, 133-153, 169-189, 200-220, 240-260, 264-284, 289-309, and 338-358; these read GAMV…IDHL, TPTM…LLWA, LHNP…FVGF, LRLA…IWAG, FAIN…VGAG, GLAI…AYLV, LAVL…FNAP, IFMG…IAVA, IVLA…IVQV, and QIVI…LSTL.

Belongs to the glycosyltransferase 4 family. MraY subfamily. It depends on Mg(2+) as a cofactor.

Its subcellular location is the cell inner membrane. The enzyme catalyses UDP-N-acetyl-alpha-D-muramoyl-L-alanyl-gamma-D-glutamyl-meso-2,6-diaminopimeloyl-D-alanyl-D-alanine + di-trans,octa-cis-undecaprenyl phosphate = di-trans,octa-cis-undecaprenyl diphospho-N-acetyl-alpha-D-muramoyl-L-alanyl-D-glutamyl-meso-2,6-diaminopimeloyl-D-alanyl-D-alanine + UMP. The protein operates within cell wall biogenesis; peptidoglycan biosynthesis. Functionally, catalyzes the initial step of the lipid cycle reactions in the biosynthesis of the cell wall peptidoglycan: transfers peptidoglycan precursor phospho-MurNAc-pentapeptide from UDP-MurNAc-pentapeptide onto the lipid carrier undecaprenyl phosphate, yielding undecaprenyl-pyrophosphoryl-MurNAc-pentapeptide, known as lipid I. This chain is Phospho-N-acetylmuramoyl-pentapeptide-transferase, found in Afipia carboxidovorans (strain ATCC 49405 / DSM 1227 / KCTC 32145 / OM5) (Oligotropha carboxidovorans).